The chain runs to 432 residues: Ciliated left-right organizer protein containing ZP-N domains homolog (432 aa).

As to expression, expressed specifically by cells of the ciliated left-right organizer.

In Danio rerio (Zebrafish), this protein is Ciliated left-right organizer protein containing ZP-N domains homolog (ciroz).